A 621-amino-acid polypeptide reads, in one-letter code: Type 2 DNA topoisomerase 6 subunit B (621 aa).

ATP-binding positions include asparagine 48, aspartate 80, 101 to 102 (SR), 111 to 118 (GQQGIGIS), and lysine 435.

The protein belongs to the TOP6B family. In terms of assembly, homodimer. Heterotetramer of two Top6A and two Top6B chains.

The catalysed reaction is ATP-dependent breakage, passage and rejoining of double-stranded DNA.. In terms of biological role, relaxes both positive and negative superturns and exhibits a strong decatenase activity. In Methanosarcina acetivorans (strain ATCC 35395 / DSM 2834 / JCM 12185 / C2A), this protein is Type 2 DNA topoisomerase 6 subunit B.